Reading from the N-terminus, the 50-residue chain is Mast cell degranulating peptide (50 aa).

An N-terminal signal peptide occupies residues 1–27; it reads MISMLRCTFFFVSVILITSYFVTPTMS. Residue Lys-29 is modified to N6-formyllysine. Cysteines 30 and 42 form a disulfide. N6-formyllysine occurs at positions 44 and 48. Asn-49 is modified (asparagine amide).

Expressed by the venom gland.

Its subcellular location is the secreted. In terms of biological role, potent anti-inflammatory agent. At low concentrations, mediates the degranulation of mast cells thus evoking an inflammatory response. Also acts as a neurotoxin capable of blocking a class of voltage-gated potassium channels. This Apis cerana cerana (Oriental honeybee) protein is Mast cell degranulating peptide.